A 196-amino-acid chain; its full sequence is MSKPDVSKLNRGNIVEFIGGIFDRRGDEEYLGEPVTMAEHMLQGATIAEQNGQPEEIIVGALLHDIGHFTSEFGMFSMDDTEDRYHEEAGAEVLEQFFPSVITDCVRYHVAAKRYLCATKPEYFNRLSEASIHSLKLQGGPMDAEEVAEFEKNPNLKQIIAVRYLDEAGKRADMETPDYWHFAPMVQRMVDKHMGA.

Tyr30 contributes to the [(1R)-1-hydroxy-2-(trimethylamino)ethyl]phosphonate binding site. Fe cation contacts are provided by Tyr30, His40, His64, and Asp65. An HD domain is found at 37 to 156; the sequence is MAEHMLQGAT…VAEFEKNPNL (120 aa). The [(1R)-1-hydroxy-2-(trimethylamino)ethyl]phosphonate site is built by His68, His86, His109, Lys113, Ser131, Ser134, and Arg163. Positions 86 and 109 each coordinate Fe cation. Asp166 contributes to the Fe cation binding site.

It depends on Fe cation as a cofactor.

The enzyme catalyses [(1R)-1-hydroxy-2-(trimethylamino)ethyl]phosphonate + O2 = glycine betaine + phosphate + 2 H(+). Its function is as follows. Involved in the degradation of the naturally occurring organophosphonate 2-(trimethylammonio)ethylphosphonate (TMAEP). Catalyzes the O(2)-dependent cleavage of (R)-1-hydroxy-2-(trimethylammonio)ethylphosphonate (OH-TMAEP) to yield glycine betaine and phosphate. Is highly specific for its N-trimethylated substrate. The protein is [1-hydroxy-2-(trimethylamino)ethyl]phosphonate dioxygenase (glycine-betaine-forming) of Leisingera caerulea (Phaeobacter caeruleus).